Here is a 423-residue protein sequence, read N- to C-terminus: Enolase (423 aa).

(2R)-2-phosphoglycerate is bound at residue Q162. Residue E204 is the Proton donor of the active site. Residues D241, E284, and D311 each contribute to the Mg(2+) site. Residues K336, R365, S366, and K387 each contribute to the (2R)-2-phosphoglycerate site. The active-site Proton acceptor is K336.

The protein belongs to the enolase family. The cofactor is Mg(2+).

It is found in the cytoplasm. Its subcellular location is the secreted. It localises to the cell surface. It catalyses the reaction (2R)-2-phosphoglycerate = phosphoenolpyruvate + H2O. The protein operates within carbohydrate degradation; glycolysis; pyruvate from D-glyceraldehyde 3-phosphate: step 4/5. Functionally, catalyzes the reversible conversion of 2-phosphoglycerate (2-PG) into phosphoenolpyruvate (PEP). It is essential for the degradation of carbohydrates via glycolysis. The protein is Enolase of Bartonella bacilliformis (strain ATCC 35685 / KC583 / Herrer 020/F12,63).